The sequence spans 153 residues: 3-hydroxyacyl-[acyl-carrier-protein] dehydratase FabZ (153 aa).

His-54 is a catalytic residue.

It belongs to the thioester dehydratase family. FabZ subfamily.

The protein resides in the cytoplasm. The catalysed reaction is a (3R)-hydroxyacyl-[ACP] = a (2E)-enoyl-[ACP] + H2O. Functionally, involved in unsaturated fatty acids biosynthesis. Catalyzes the dehydration of short chain beta-hydroxyacyl-ACPs and long chain saturated and unsaturated beta-hydroxyacyl-ACPs. The polypeptide is 3-hydroxyacyl-[acyl-carrier-protein] dehydratase FabZ (Shewanella amazonensis (strain ATCC BAA-1098 / SB2B)).